A 226-amino-acid polypeptide reads, in one-letter code: ATP synthase F(0) complex subunit a (226 aa).

6 consecutive transmembrane segments (helical) span residues F6 to F26, W68 to L88, Q97 to F117, I138 to V158, I164 to I184, and A189 to I209.

This sequence belongs to the ATPase A chain family. Component of the ATP synthase complex composed at least of ATP5F1A/subunit alpha, ATP5F1B/subunit beta, ATP5MC1/subunit c (homooctomer), MT-ATP6/subunit a, MT-ATP8/subunit 8, ATP5ME/subunit e, ATP5MF/subunit f, ATP5MG/subunit g, ATP5MK/subunit k, ATP5MJ/subunit j, ATP5F1C/subunit gamma, ATP5F1D/subunit delta, ATP5F1E/subunit epsilon, ATP5PF/subunit F6, ATP5PB/subunit b, ATP5PD/subunit d, ATP5PO/subunit OSCP. ATP synthase complex consists of a soluble F(1) head domain (subunits alpha(3) and beta(3)) - the catalytic core - and a membrane F(0) domain - the membrane proton channel (subunits c, a, 8, e, f, g, k and j). These two domains are linked by a central stalk (subunits gamma, delta, and epsilon) rotating inside the F1 region and a stationary peripheral stalk (subunits F6, b, d, and OSCP). Interacts with DNAJC30; interaction is direct.

The protein localises to the mitochondrion inner membrane. It carries out the reaction H(+)(in) = H(+)(out). Its function is as follows. Subunit a, of the mitochondrial membrane ATP synthase complex (F(1)F(0) ATP synthase or Complex V) that produces ATP from ADP in the presence of a proton gradient across the membrane which is generated by electron transport complexes of the respiratory chain. ATP synthase complex consist of a soluble F(1) head domain - the catalytic core - and a membrane F(1) domain - the membrane proton channel. These two domains are linked by a central stalk rotating inside the F(1) region and a stationary peripheral stalk. During catalysis, ATP synthesis in the catalytic domain of F(1) is coupled via a rotary mechanism of the central stalk subunits to proton translocation. With the subunit c (ATP5MC1), forms the proton-conducting channel in the F(0) domain, that contains two crucial half-channels (inlet and outlet) that facilitate proton movement from the mitochondrial intermembrane space (IMS) into the matrix. Protons are taken up via the inlet half-channel and released through the outlet half-channel, following a Grotthuss mechanism. The protein is ATP synthase F(0) complex subunit a of Ictidomys tridecemlineatus (Thirteen-lined ground squirrel).